A 206-amino-acid chain; its full sequence is Small ribosomal subunit protein uS4 (206 aa).

The S4 RNA-binding domain occupies 96 to 156 (SRLDNVVYRM…EKSRNQSRIA (61 aa)).

Belongs to the universal ribosomal protein uS4 family. As to quaternary structure, part of the 30S ribosomal subunit. Contacts protein S5. The interaction surface between S4 and S5 is involved in control of translational fidelity.

In terms of biological role, one of the primary rRNA binding proteins, it binds directly to 16S rRNA where it nucleates assembly of the body of the 30S subunit. Its function is as follows. With S5 and S12 plays an important role in translational accuracy. This Hydrogenovibrio crunogenus (strain DSM 25203 / XCL-2) (Thiomicrospira crunogena) protein is Small ribosomal subunit protein uS4.